A 125-amino-acid chain; its full sequence is Fluoride-specific ion channel FluC (125 aa).

4 consecutive transmembrane segments (helical) span residues 4-24, 35-55, 68-88, and 100-120; these read IALVATGGAIGSVFRYLVGVW, WGTLAVNIVGSFLIGLLVELV, FLVTGVLGGFTTFSSFSLDAV, and AFYILASLVVSIAAVFAGLAL. The Na(+) site is built by Gly75 and Thr78.

Belongs to the fluoride channel Fluc/FEX (TC 1.A.43) family.

It localises to the cell inner membrane. It carries out the reaction fluoride(in) = fluoride(out). With respect to regulation, na(+) is not transported, but it plays an essential structural role and its presence is essential for fluoride channel function. In terms of biological role, fluoride-specific ion channel. Important for reducing fluoride concentration in the cell, thus reducing its toxicity. The protein is Fluoride-specific ion channel FluC of Agrobacterium fabrum (strain C58 / ATCC 33970) (Agrobacterium tumefaciens (strain C58)).